The sequence spans 376 residues: Heptahelical transmembrane protein ADIPOR1 (376 aa).

Residues 1-90 (MGEEAAMATM…LSLFSWHNET (90 aa)) lie on the Cytoplasmic side of the membrane. Positions 20–46 (PAAAPAPAKGGGSKKKRKQQKREEKRK) are disordered. Residues 91-111 (INIWTHLLGFVLFFGLTVLHL) form a helical membrane-spanning segment. Topologically, residues 112–179 (GQYFPQVADL…AAAAATTRWP (68 aa)) are extracellular. Residues 180 to 200 (FFVFLAGAMFCLLSSAACHLL) form a helical membrane-spanning segment. At 201 to 216 (SCHSHRLNLFLIRLDY) the chain is on the cytoplasmic side. Residues 217-237 (TGIAVMIVVSFFPPIYYIFQC) form a helical membrane-spanning segment. The Extracellular portion of the chain corresponds to 238-240 (EPR). The helical transmembrane segment at 241-261 (WQVVYLSAITAAGVATVYALM) threads the bilayer. Residues 262–274 (SPRLSAARYRAHR) lie on the Cytoplasmic side of the membrane. The helical transmembrane segment at 275 to 295 (ALLFVAMGLSGVVPAAHAVAV) threads the bilayer. At 296-303 (NWHEPRRN) the chain is on the extracellular side. The helical transmembrane segment at 304 to 324 (VTLAYEGAMAASYLAGTAFYL) threads the bilayer. Residues 325–344 (TRVPERWRPGMFDLCGHSHQ) are Cytoplasmic-facing. Residues 345–365 (IFHALVIAGALAHYAAAIVFI) traverse the membrane as a helical segment. The Extracellular portion of the chain corresponds to 366–376 (QARDEMGCPAP).

This sequence belongs to the ADIPOR family.

The protein localises to the membrane. In terms of biological role, may play a role in abiotic stress response. In Oryza sativa subsp. japonica (Rice), this protein is Heptahelical transmembrane protein ADIPOR1 (ADIPOR1).